Consider the following 444-residue polypeptide: Methylenetetrahydrofolate--tRNA-(uracil-5-)-methyltransferase TrmFO (444 aa).

FAD is bound at residue 9–14; it reads GAGMAG.

This sequence belongs to the MnmG family. TrmFO subfamily. The cofactor is FAD.

It localises to the cytoplasm. It catalyses the reaction uridine(54) in tRNA + (6R)-5,10-methylene-5,6,7,8-tetrahydrofolate + NADH + H(+) = 5-methyluridine(54) in tRNA + (6S)-5,6,7,8-tetrahydrofolate + NAD(+). The catalysed reaction is uridine(54) in tRNA + (6R)-5,10-methylene-5,6,7,8-tetrahydrofolate + NADPH + H(+) = 5-methyluridine(54) in tRNA + (6S)-5,6,7,8-tetrahydrofolate + NADP(+). Its function is as follows. Catalyzes the folate-dependent formation of 5-methyl-uridine at position 54 (M-5-U54) in all tRNAs. This chain is Methylenetetrahydrofolate--tRNA-(uracil-5-)-methyltransferase TrmFO, found in Cereibacter sphaeroides (strain ATCC 17025 / ATH 2.4.3) (Rhodobacter sphaeroides).